Consider the following 88-residue polypeptide: uncharacterized protein (88 aa).

Positions 1-24 are cleaved as a signal peptide; sequence MLPRSCKDFYETLRTAVLCGQACA.

It to Rhizobium NGR234A y4oL.

This is an uncharacterized protein from Sinorhizobium fredii (strain NBRC 101917 / NGR234).